A 637-amino-acid polypeptide reads, in one-letter code: DNA damage-binding protein CMR1 (637 aa).

Disordered regions lie at residues 1–91 and 144–168; these read MIES…EEEA and LVDTKDENKRRSANKPDPQFSTERR. Basic and acidic residues-rich tracts occupy residues 8–23 and 74–91; these read EQERLKNIRENERLMK and AGHEADSETLKRKYEEEA. 5 WD repeats span residues 185 to 226, 255 to 295, 297 to 321, 361 to 401, and 431 to 470; these read VTPK…FASN, HARS…SEEI, AGEEDVLLSIFDVLSPSTHPSVYMD, VCEK…SVVK, and KARQACTSVDFSPRGDQLVGVSYDDVVKVWSMEPGSLFSE. Disordered regions lie at residues 482-508 and 525-549; these read SNKPKGAVKKQVPDSASDTGPGLLSWL and KQEQDAPSPSLSKRPDDVLANPTRI. 2 WD repeats span residues 556 to 598 and 602 to 637; these read GKWL…LRSL and NLVTAVPAVTCMHPVLPARLVTGNASGRCTFWSPDP.

This sequence belongs to the WD repeat DDB2/WDR76 family.

Its function is as follows. DNA-binding protein that binds to both single- and double-stranded DNA. Binds preferentially to UV-damaged DNA. May be involved in DNA-metabolic processes. The sequence is that of DNA damage-binding protein CMR1 from Mycosarcoma maydis (Corn smut fungus).